The following is a 563-amino-acid chain: Alpha-keto-acid decarboxylase (563 aa).

Residue Glu59 coordinates thiamine diphosphate. Residues 348 to 367 (SPPVASPPAEPLPPPPPREQ) are disordered. Pro residues predominate over residues 351–366 (VASPPAEPLPPPPPRE). The thiamine pyrophosphate binding stretch occupies residues 394–476 (TSFYGMADHR…VVVNNDGYTV (83 aa)). The Mg(2+) site is built by Asp444, Asn471, and Gly473.

Belongs to the TPP enzyme family. A metal cation is required as a cofactor. It depends on thiamine diphosphate as a cofactor.

Functionally, decarboxylates branched-chain and aromatic alpha-keto acids to aldehydes. The chain is Alpha-keto-acid decarboxylase (kdc) from Mycobacterium avium (strain 104).